We begin with the raw amino-acid sequence, 106 residues long: Urease subunit beta (106 aa).

This sequence belongs to the urease beta subunit family. In terms of assembly, heterotrimer of UreA (gamma), UreB (beta) and UreC (alpha) subunits. Three heterotrimers associate to form the active enzyme.

The protein resides in the cytoplasm. The catalysed reaction is urea + 2 H2O + H(+) = hydrogencarbonate + 2 NH4(+). It functions in the pathway nitrogen metabolism; urea degradation; CO(2) and NH(3) from urea (urease route): step 1/1. In Acinetobacter baumannii (strain SDF), this protein is Urease subunit beta.